A 136-amino-acid polypeptide reads, in one-letter code: Large-conductance mechanosensitive channel (136 aa).

The next 2 helical transmembrane spans lie at 9 to 29 (AFAV…GAAF) and 78 to 98 (FIQT…GVKA).

It belongs to the MscL family. In terms of assembly, homopentamer.

It is found in the cell inner membrane. Its function is as follows. Channel that opens in response to stretch forces in the membrane lipid bilayer. May participate in the regulation of osmotic pressure changes within the cell. The sequence is that of Large-conductance mechanosensitive channel from Azotobacter vinelandii (strain DJ / ATCC BAA-1303).